The sequence spans 112 residues: Large ribosomal subunit protein bL17 (112 aa).

This sequence belongs to the bacterial ribosomal protein bL17 family. Part of the 50S ribosomal subunit. Contacts protein L32.

The sequence is that of Large ribosomal subunit protein bL17 from Caldanaerobacter subterraneus subsp. tengcongensis (strain DSM 15242 / JCM 11007 / NBRC 100824 / MB4) (Thermoanaerobacter tengcongensis).